The sequence spans 443 residues: tRNA modification GTPase MnmE (443 aa).

3 residues coordinate (6S)-5-formyl-5,6,7,8-tetrahydrofolate: arginine 23, glutamate 82, and lysine 121. The region spanning 215–364 (GTSIVLAGHP…LKQFIQKWIQ (150 aa)) is the TrmE-type G domain. K(+) is bound at residue asparagine 225. GTP contacts are provided by residues 225-230 (NAGKSS), 244-250 (TDIPGTT), and 269-272 (DSAG). Serine 229 provides a ligand contact to Mg(2+). K(+) contacts are provided by threonine 244, isoleucine 246, and threonine 249. Threonine 250 lines the Mg(2+) pocket. Lysine 443 provides a ligand contact to (6S)-5-formyl-5,6,7,8-tetrahydrofolate.

The protein belongs to the TRAFAC class TrmE-Era-EngA-EngB-Septin-like GTPase superfamily. TrmE GTPase family. Homodimer. Heterotetramer of two MnmE and two MnmG subunits. The cofactor is K(+).

The protein localises to the cytoplasm. In terms of biological role, exhibits a very high intrinsic GTPase hydrolysis rate. Involved in the addition of a carboxymethylaminomethyl (cmnm) group at the wobble position (U34) of certain tRNAs, forming tRNA-cmnm(5)s(2)U34. The sequence is that of tRNA modification GTPase MnmE from Chlamydia felis (strain Fe/C-56) (Chlamydophila felis).